The sequence spans 84 residues: MPVKEKVGIVVSNKMQKTIVVKVESRYSHPIYSKTMTKTRKYLAHDEMGECNIGDQVLVQECRPLSKRKRWTLSKVLSKSSLVS.

The protein belongs to the universal ribosomal protein uS17 family. Part of the 30S ribosomal subunit.

Its subcellular location is the plastid. It localises to the chloroplast. Functionally, one of the primary rRNA binding proteins, it binds specifically to the 5'-end of 16S ribosomal RNA. In Trieres chinensis (Marine centric diatom), this protein is Small ribosomal subunit protein uS17c (rps17).